Reading from the N-terminus, the 306-residue chain is Porphobilinogen deaminase (306 aa).

C239 carries the S-(dipyrrolylmethanemethyl)cysteine modification.

It belongs to the HMBS family. Monomer. It depends on dipyrromethane as a cofactor.

The enzyme catalyses 4 porphobilinogen + H2O = hydroxymethylbilane + 4 NH4(+). It functions in the pathway porphyrin-containing compound metabolism; protoporphyrin-IX biosynthesis; coproporphyrinogen-III from 5-aminolevulinate: step 2/4. In terms of biological role, tetrapolymerization of the monopyrrole PBG into the hydroxymethylbilane pre-uroporphyrinogen in several discrete steps. This Helicobacter pylori (strain P12) protein is Porphobilinogen deaminase.